Here is a 420-residue protein sequence, read N- to C-terminus: Alpha-ketoglutarate-dependent xanthine dioxygenase xan-1 (420 aa).

Fe cation is bound by residues His-157 and Asp-159. Residues Thr-206 and Trp-336 each contribute to the 2-oxoglutarate site. His-351 provides a ligand contact to Fe cation. Arg-366 contributes to the 2-oxoglutarate binding site. Arg-366 serves as a coordination point for substrate.

The protein belongs to the TfdA dioxygenase family. Fe(2+) is required as a cofactor.

Its subcellular location is the cytoplasm. The protein resides in the cytosol. The catalysed reaction is xanthine + 2-oxoglutarate + O2 = urate + succinate + CO2. Its function is as follows. Alpha-ketoglutarate-dependent xanthine dioxygenase is a non-heme mononuclear Fe(2+) enzyme that decarboxylates alpha-ketoglutarate to succinate and CO(2) while hydroxylating xanthine to generate uric acid. Allows xanthine utilization as a nitrogen source. This is Alpha-ketoglutarate-dependent xanthine dioxygenase xan-1 from Neurospora crassa (strain ATCC 24698 / 74-OR23-1A / CBS 708.71 / DSM 1257 / FGSC 987).